We begin with the raw amino-acid sequence, 141 residues long: Putative inactive deoxyuridine 5'-triphosphate nucleotidohydrolase-like protein FLJ16323 (141 aa).

It belongs to the dUTPase family.

The sequence is that of Putative inactive deoxyuridine 5'-triphosphate nucleotidohydrolase-like protein FLJ16323 from Homo sapiens (Human).